We begin with the raw amino-acid sequence, 856 residues long: Leucine--tRNA ligase (856 aa).

The short motif at 53-63 is the 'HIGH' region element; sequence PYPSGNLHMGH. A 'KMSKS' region motif is present at residues 622 to 626; that stretch reads KMSKS. Position 625 (lysine 625) interacts with ATP.

It belongs to the class-I aminoacyl-tRNA synthetase family.

The protein localises to the cytoplasm. The enzyme catalyses tRNA(Leu) + L-leucine + ATP = L-leucyl-tRNA(Leu) + AMP + diphosphate. In Prochlorococcus marinus (strain MIT 9312), this protein is Leucine--tRNA ligase.